A 146-amino-acid chain; its full sequence is Large ribosomal subunit protein uL15 (146 aa).

The span at 1–18 (MKLHELKPSEGSRKERNR) shows a compositional bias: basic and acidic residues. Residues 1–57 (MKLHELKPSEGSRKERNRVGRGIGSGNGKTSGKGHKGQNARSGGGVRPGFEGGQMPL) form a disordered region. Composition is skewed to gly residues over residues 21 to 31 (RGIGSGNGKTS) and 42 to 52 (SGGGVRPGFEG).

Belongs to the universal ribosomal protein uL15 family. Part of the 50S ribosomal subunit.

Binds to the 23S rRNA. The sequence is that of Large ribosomal subunit protein uL15 from Bacillus pumilus (strain SAFR-032).